Consider the following 160-residue polypeptide: Anaerobic nitrite reductase AHB1 (160 aa).

Positions valine 8–asparagine 157 constitute a Globin domain. The short motif at glutamate 41–threonine 45 is the Homodimerization element. Heme b is bound by residues serine 51, lysine 65, histidine 69, arginine 99, serine 103, and histidine 104. A Homodimerization motif is present at residues aspartate 111–glutamate 123.

The protein belongs to the plant globin family. As to quaternary structure, homodimer. It depends on heme b as a cofactor. In terms of tissue distribution, expressed in roots and rosette leaves.

The protein localises to the cytoplasm. It localises to the nucleus. It catalyses the reaction Fe(III)-heme b-[protein] + nitric oxide + H2O = Fe(II)-heme b-[protein] + nitrite + 2 H(+). In terms of biological role, phytoglobin that reduces nitrite to nitric oxide (NO) under anoxic conditions (e.g. during flooding or in waterlogged soil). May not function as an oxygen storage or transport protein. Has an unusually high affinity for O(2) through an hexacoordinate heme iron because of a very low dissociation constant. This chain is Anaerobic nitrite reductase AHB1, found in Arabidopsis thaliana (Mouse-ear cress).